We begin with the raw amino-acid sequence, 186 residues long: Ion-translocating oxidoreductase complex subunit B (186 aa).

The segment at 1 to 23 (MLTPILALTALALIAGALLGFAA) is hydrophobic. One can recognise a 4Fe-4S domain in the interval 29–88 (EGNPIADQVDAVLPQTQCGQCGFGGCRPYAEAIAAGEAEINRCPPGGQDTVQTLADLLGV). [4Fe-4S] cluster is bound by residues Cys46, Cys49, Cys54, Cys71, Cys114, Cys117, Cys120, Cys124, Cys144, Cys147, Cys150, and Cys154. 2 consecutive 4Fe-4S ferredoxin-type domains span residues 105-134 (QVAW…GAAK) and 135-164 (QMHT…MVPV).

The protein belongs to the 4Fe4S bacterial-type ferredoxin family. RnfB subfamily. In terms of assembly, the complex is composed of six subunits: RnfA, RnfB, RnfC, RnfD, RnfE and RnfG. It depends on [4Fe-4S] cluster as a cofactor.

Its subcellular location is the cell inner membrane. Its function is as follows. Part of a membrane-bound complex that couples electron transfer with translocation of ions across the membrane. This Alkalilimnicola ehrlichii (strain ATCC BAA-1101 / DSM 17681 / MLHE-1) protein is Ion-translocating oxidoreductase complex subunit B.